The following is a 227-amino-acid chain: Protein LppM (227 aa).

The first 24 residues, 1 to 24, serve as a signal peptide directing secretion; sequence MARTRRRGMLAIAMLLMLVPLATG. Residue C25 is the site of N-palmitoyl cysteine attachment. C25 carries S-diacylglycerol cysteine lipidation. Residues 26–185 are important for bacterial uptake by host macrophages; that stretch reads LRVRASITIS…ARYTDPNTRS (160 aa). A helical transmembrane segment spans residues 190-210; sequence GIWLGIAAFAAAGVVAVLAWI.

Post-translationally, a shorter form (about 20 kDa) is secreted; upon overexpression of the whole protein in M.smegmatis the C-terminus of the short form is about residue 187, suggesting it is generated by cleavage of the protein before its C-terminal transmembrane domain.

The protein localises to the membrane. It is found in the secreted. Its subcellular location is the cell wall. A putative lipoprotein that seems to be specialized for the initial steps of macrophage infection. A non-acylated fragment (residues 26-185) binds phosphatidyl-myo-inositol mannosides (PIMs). Limits, in a TLR2-dependent fashion, bacterial uptake by host (mouse); this effect may be mediated by nonacylated fragment 26-185. Plays a TLR2-dependent role in host phagosome maturation arrest. Plays a TLR2-independent role in chemokine production during the first 24 hours of mouse infection. This chain is Protein LppM (lppM), found in Mycobacterium tuberculosis (strain ATCC 25618 / H37Rv).